An 837-amino-acid polypeptide reads, in one-letter code: Zinc fingers and homeoboxes protein 2 (837 aa).

Positions 27–77 (VDRAKEKGIGTPQPDVAKDSWAAELENSSKENEVIEVKSMGESQSKKLQGG) are interaction with EFNB1. The residue at position 37 (T37) is a Phosphothreonine. A Glycyl lysine isopeptide (Lys-Gly) (interchain with G-Cter in SUMO2) cross-link involves residue K64. C2H2-type zinc fingers lie at residues 78–101 (YECK…DMQH) and 110–133 (YVCA…SKFH). Over residues 164 to 180 (SITTSGPGTGDSDSGIS) the composition is skewed to low complexity. A disordered region spans residues 164-204 (SITTSGPGTGDSDSGISVSKTPIMKPGKPKADAKKVPKKPE). Basic and acidic residues predominate over residues 192 to 204 (PKADAKKVPKKPE). The segment at 195–358 (DAKKVPKKPE…PAQLAPTKVT (164 aa)) is required for homodimerization. T207 bears the Phosphothreonine mark. 4 consecutive DNA-binding regions (homeobox) follow at residues 263–324 (NTTK…WSPE), 439–501 (TPAS…IVHI), 530–591 (PQKF…EQAV), and 628–690 (SPSP…TVKW). The tract at residues 263–446 (NTTKYNSALD…PLTPASDRKK (184 aa)) is required for repressor activity. A required for interaction with NFYA region spans residues 263-497 (NTTKYNSALD…SDHRYRCQRG (235 aa)). The tract at residues 317 to 446 (HGISWSPEEV…PLTPASDRKK (130 aa)) is required for nuclear localization. Residues 404–445 (GQKRPLVTPQAAPEPKRPHIAQVPEPPPKVANPPLTPASDRK) are disordered. Over residues 427 to 439 (PEPPPKVANPPLT) the composition is skewed to pro residues. A Glycyl lysine isopeptide (Lys-Gly) (interchain with G-Cter in SUMO2) cross-link involves residue K455. The segment at 755-837 (PAKDCLPAKP…DCVPAEAGQA (83 aa)) is disordered. S825 and S827 each carry phosphoserine.

The protein belongs to the ZHX family. Homodimer (via homeobox domain). Heterodimer with ZHX1 (via homeobox domain 1). Heterodimer with ZHX3 (via homeobox domain 1). Heterodimerization with ZHX1 is not necessary for repressor activity. Interacts (via homeobox domain) with NFYA (via N-terminus). Interacts with EFNB1 intracellular domain peptide; the interaction enhances ZHX2 transcriptional repression activity. As to expression, ubiquitously expressed. Expressed in podocytes.

The protein localises to the nucleus. Acts as a transcriptional repressor. Represses the promoter activity of the CDC25C gene stimulated by NFYA. May play a role in retinal development where it regulates the composition of bipolar cell populations, by promoting differentiation of bipolar OFF-type cells. In the brain, may promote maintenance and suppress differentiation of neural progenitor cells in the developing cortex. This Homo sapiens (Human) protein is Zinc fingers and homeoboxes protein 2 (ZHX2).